A 557-amino-acid chain; its full sequence is DNA ligase B (557 aa).

Catalysis depends on K125, which acts as the N6-AMP-lysine intermediate.

This sequence belongs to the NAD-dependent DNA ligase family. LigB subfamily.

It carries out the reaction NAD(+) + (deoxyribonucleotide)n-3'-hydroxyl + 5'-phospho-(deoxyribonucleotide)m = (deoxyribonucleotide)n+m + AMP + beta-nicotinamide D-nucleotide.. In terms of biological role, catalyzes the formation of phosphodiester linkages between 5'-phosphoryl and 3'-hydroxyl groups in double-stranded DNA using NAD as a coenzyme and as the energy source for the reaction. The polypeptide is DNA ligase B (Pseudomonas entomophila (strain L48)).